The primary structure comprises 145 residues: 3-hydroxyacyl-[acyl-carrier-protein] dehydratase FabZ (145 aa).

Residue His-47 is part of the active site.

The protein belongs to the thioester dehydratase family. FabZ subfamily.

The protein localises to the cytoplasm. It catalyses the reaction a (3R)-hydroxyacyl-[ACP] = a (2E)-enoyl-[ACP] + H2O. Involved in unsaturated fatty acids biosynthesis. Catalyzes the dehydration of short chain beta-hydroxyacyl-ACPs and long chain saturated and unsaturated beta-hydroxyacyl-ACPs. The sequence is that of 3-hydroxyacyl-[acyl-carrier-protein] dehydratase FabZ from Acidovorax sp. (strain JS42).